The following is a 319-amino-acid chain: Guanidinobutyrase (319 aa).

Mn(2+) contacts are provided by H129, D152, H154, D156, D243, and D245.

The protein belongs to the arginase family. Agmatinase subfamily. In terms of assembly, homohexamer. The cofactor is Mn(2+).

It carries out the reaction 4-guanidinobutanoate + H2O = urea + 4-aminobutanoate. Catalyzes specifically the hydrolysis of 4-guanidinobutanoate to 4-aminobutanoate and urea. Has no activity against arginine, agmatine, 3-guanidinopropionate and guanidinoacetate. The sequence is that of Guanidinobutyrase (gbuA) from Pseudomonas aeruginosa (strain ATCC 15692 / DSM 22644 / CIP 104116 / JCM 14847 / LMG 12228 / 1C / PRS 101 / PAO1).